Here is a 275-residue protein sequence, read N- to C-terminus: Putative pyruvate, phosphate dikinase regulatory protein (275 aa).

149–156 (GVSRTSKT) serves as a coordination point for ADP.

This sequence belongs to the pyruvate, phosphate/water dikinase regulatory protein family. PDRP subfamily.

It catalyses the reaction N(tele)-phospho-L-histidyl/L-threonyl-[pyruvate, phosphate dikinase] + ADP = N(tele)-phospho-L-histidyl/O-phospho-L-threonyl-[pyruvate, phosphate dikinase] + AMP + H(+). It carries out the reaction N(tele)-phospho-L-histidyl/O-phospho-L-threonyl-[pyruvate, phosphate dikinase] + phosphate + H(+) = N(tele)-phospho-L-histidyl/L-threonyl-[pyruvate, phosphate dikinase] + diphosphate. Its function is as follows. Bifunctional serine/threonine kinase and phosphorylase involved in the regulation of the pyruvate, phosphate dikinase (PPDK) by catalyzing its phosphorylation/dephosphorylation. This chain is Putative pyruvate, phosphate dikinase regulatory protein, found in Levilactobacillus brevis (strain ATCC 367 / BCRC 12310 / CIP 105137 / JCM 1170 / LMG 11437 / NCIMB 947 / NCTC 947) (Lactobacillus brevis).